A 255-amino-acid polypeptide reads, in one-letter code: Gene 54 protein (255 aa).

This Mycobacterium (Mycobacteriophage L5) protein is Gene 54 protein (54).